The sequence spans 53 residues: UPF0391 membrane protein PSEEN0090 (53 aa).

The next 2 membrane-spanning stretches (helical) occupy residues 4 to 24 (WAITFLIIAIVAAVLGFGGIA) and 29 to 49 (GIAKILFIIFLVLFVASFFFG).

Belongs to the UPF0391 family.

The protein resides in the cell membrane. The sequence is that of UPF0391 membrane protein PSEEN0090 from Pseudomonas entomophila (strain L48).